A 304-amino-acid polypeptide reads, in one-letter code: MATH domain and coiled-coil domain-containing protein At2g42470 (304 aa).

Positions 6-123 constitute an MATH domain; the sequence is QTSFTFEIDN…NNKLIIEVQV (118 aa). Positions 219 to 292 form a coiled coil; the sequence is FKVDWLKKKL…LKIELDRTRR (74 aa).

This chain is MATH domain and coiled-coil domain-containing protein At2g42470, found in Arabidopsis thaliana (Mouse-ear cress).